The primary structure comprises 185 residues: Homeobox expressed in ES cells 1 (185 aa).

Positions 108–167 form a DNA-binding region, homeobox; sequence GRRPRTAFTQNQIEVLENVFRVNCYPGIDIREDLAQKLNLEEDRIQIWFQNRRAKLKRSH.

Belongs to the ANF homeobox family. As to quaternary structure, can form heterodimers with PROP1 in binding to DNA. Interacts with TLE1.

The protein resides in the nucleus. Its function is as follows. Required for the normal development of the forebrain, eyes and other anterior structures such as the olfactory placodes and pituitary gland. Possible transcriptional repressor. Binds to the palindromic PIII sequence, 5'-AGCTTGAGTCTAATTGAATTAACTGTAC-3'. HESX1 and PROP1 bind as heterodimers on this palindromic site, and, in vitro, HESX1 can antagonize PROP1 activation. This Pan paniscus (Pygmy chimpanzee) protein is Homeobox expressed in ES cells 1 (HESX1).